Reading from the N-terminus, the 393-residue chain is Riboflavin biosynthesis protein RibBA (393 aa).

The interval 1–200 is DHBP synthase; that stretch reads MQFDNIDSAL…IDDLIEYRKK (200 aa). Residues 27 to 28, D32, 139 to 143, and E163 each bind D-ribulose 5-phosphate; these read RE and RNGHT. Residue E28 participates in Mg(2+) binding. H142 is a Mg(2+) binding site. The interval 201 to 393 is GTP cyclohydrolase II; it reads LEPEIEFKAK…TKKIKMGHLI (193 aa). 249–253 provides a ligand contact to GTP; it reads RLHSA. Zn(2+) is bound by residues C254, C265, and C267. GTP is bound by residues Q270, 291 to 293, and T313; that span reads EGR. Residue D325 is the Proton acceptor; for GTP cyclohydrolase activity of the active site. R327 (nucleophile; for GTP cyclohydrolase activity) is an active-site residue. GTP is bound by residues S348 and K353.

It in the N-terminal section; belongs to the DHBP synthase family. The protein in the C-terminal section; belongs to the GTP cyclohydrolase II family. Requires Mg(2+) as cofactor. Mn(2+) serves as cofactor. Zn(2+) is required as a cofactor.

It carries out the reaction D-ribulose 5-phosphate = (2S)-2-hydroxy-3-oxobutyl phosphate + formate + H(+). It catalyses the reaction GTP + 4 H2O = 2,5-diamino-6-hydroxy-4-(5-phosphoribosylamino)-pyrimidine + formate + 2 phosphate + 3 H(+). The protein operates within cofactor biosynthesis; riboflavin biosynthesis; 2-hydroxy-3-oxobutyl phosphate from D-ribulose 5-phosphate: step 1/1. It functions in the pathway cofactor biosynthesis; riboflavin biosynthesis; 5-amino-6-(D-ribitylamino)uracil from GTP: step 1/4. In terms of biological role, catalyzes the conversion of D-ribulose 5-phosphate to formate and 3,4-dihydroxy-2-butanone 4-phosphate. Its function is as follows. Catalyzes the conversion of GTP to 2,5-diamino-6-ribosylamino-4(3H)-pyrimidinone 5'-phosphate (DARP), formate and pyrophosphate. In Staphylococcus aureus (strain MRSA252), this protein is Riboflavin biosynthesis protein RibBA.